A 241-amino-acid chain; its full sequence is Proteasome subunit beta type-1 (241 aa).

Position 1 is an N-acetylmethionine (M1). Positions 1 to 28 (MLSSTAMYSAPGRDLGMEPHRAAGPLQL) are excised as a propeptide. O-linked (GlcNAc) serine glycosylation occurs at S58. Residues S62 and S68 each carry the phosphoserine modification. At Y150 the chain carries Phosphotyrosine. The residue at position 162 (S162) is a Phosphoserine. K204 is modified (N6-acetyllysine). S209 carries an O-linked (GlcNAc) serine glycan.

It belongs to the peptidase T1B family. The 26S proteasome consists of a 20S proteasome core and two 19S regulatory subunits. The 20S proteasome core is a barrel-shaped complex made of 28 subunits that are arranged in four stacked rings. The two outer rings are each formed by seven alpha subunits, and the two inner rings are formed by seven beta subunits. The proteolytic activity is exerted by three beta-subunits PSMB5, PSMB6 and PSMB7. Interacts with SERPINB2. Interacts with RFPL4A. As to quaternary structure, (Microbial infection) Interacts with HIV-1 protein Tat.

The protein localises to the cytoplasm. It localises to the nucleus. Non-catalytic component of the 20S core proteasome complex involved in the proteolytic degradation of most intracellular proteins. This complex plays numerous essential roles within the cell by associating with different regulatory particles. Associated with two 19S regulatory particles, forms the 26S proteasome and thus participates in the ATP-dependent degradation of ubiquitinated proteins. The 26S proteasome plays a key role in the maintenance of protein homeostasis by removing misfolded or damaged proteins that could impair cellular functions, and by removing proteins whose functions are no longer required. Associated with the PA200 or PA28, the 20S proteasome mediates ubiquitin-independent protein degradation. This type of proteolysis is required in several pathways including spermatogenesis (20S-PA200 complex) or generation of a subset of MHC class I-presented antigenic peptides (20S-PA28 complex). In Homo sapiens (Human), this protein is Proteasome subunit beta type-1.